Consider the following 260-residue polypeptide: Putative hydro-lyase Dshi_0610 (260 aa).

It belongs to the D-glutamate cyclase family.

This chain is Putative hydro-lyase Dshi_0610, found in Dinoroseobacter shibae (strain DSM 16493 / NCIMB 14021 / DFL 12).